A 179-amino-acid polypeptide reads, in one-letter code: Crossover junction endodeoxyribonuclease RuvC (179 aa).

Residues aspartate 14, glutamate 74, and aspartate 147 contribute to the active site. Mg(2+) contacts are provided by aspartate 14, glutamate 74, and aspartate 147.

It belongs to the RuvC family. As to quaternary structure, homodimer which binds Holliday junction (HJ) DNA. The HJ becomes 2-fold symmetrical on binding to RuvC with unstacked arms; it has a different conformation from HJ DNA in complex with RuvA. In the full resolvosome a probable DNA-RuvA(4)-RuvB(12)-RuvC(2) complex forms which resolves the HJ. Mg(2+) serves as cofactor.

It localises to the cytoplasm. It catalyses the reaction Endonucleolytic cleavage at a junction such as a reciprocal single-stranded crossover between two homologous DNA duplexes (Holliday junction).. Its function is as follows. The RuvA-RuvB-RuvC complex processes Holliday junction (HJ) DNA during genetic recombination and DNA repair. Endonuclease that resolves HJ intermediates. Cleaves cruciform DNA by making single-stranded nicks across the HJ at symmetrical positions within the homologous arms, yielding a 5'-phosphate and a 3'-hydroxyl group; requires a central core of homology in the junction. The consensus cleavage sequence is 5'-(A/T)TT(C/G)-3'. Cleavage occurs on the 3'-side of the TT dinucleotide at the point of strand exchange. HJ branch migration catalyzed by RuvA-RuvB allows RuvC to scan DNA until it finds its consensus sequence, where it cleaves and resolves the cruciform DNA. This is Crossover junction endodeoxyribonuclease RuvC from Rubrobacter xylanophilus (strain DSM 9941 / JCM 11954 / NBRC 16129 / PRD-1).